Consider the following 203-residue polypeptide: uncharacterized protein (203 aa).

This sequence belongs to the DadA oxidoreductase family.

In terms of biological role, either a functional dehydrogenase or a non-functional fragment. This is an uncharacterized protein from Sinorhizobium fredii (strain NBRC 101917 / NGR234).